Here is a 62-residue protein sequence, read N- to C-terminus: Photosystem II reaction center protein Z (62 aa).

Transmembrane regions (helical) follow at residues Thr8–Ala28 and Leu41–Val61.

The protein belongs to the PsbZ family. As to quaternary structure, PSII is composed of 1 copy each of membrane proteins PsbA, PsbB, PsbC, PsbD, PsbE, PsbF, PsbH, PsbI, PsbJ, PsbK, PsbL, PsbM, PsbT, PsbY, PsbZ, Psb30/Ycf12, at least 3 peripheral proteins of the oxygen-evolving complex and a large number of cofactors. It forms dimeric complexes.

The protein resides in the plastid. Its subcellular location is the chloroplast thylakoid membrane. May control the interaction of photosystem II (PSII) cores with the light-harvesting antenna, regulates electron flow through the 2 photosystem reaction centers. PSII is a light-driven water plastoquinone oxidoreductase, using light energy to abstract electrons from H(2)O, generating a proton gradient subsequently used for ATP formation. This chain is Photosystem II reaction center protein Z, found in Stigeoclonium helveticum (Green alga).